Reading from the N-terminus, the 436-residue chain is tRNA(Ile)-lysidine synthase (436 aa).

25-30 (SGGLDS) contributes to the ATP binding site.

It belongs to the tRNA(Ile)-lysidine synthase family.

It is found in the cytoplasm. It carries out the reaction cytidine(34) in tRNA(Ile2) + L-lysine + ATP = lysidine(34) in tRNA(Ile2) + AMP + diphosphate + H(+). Its function is as follows. Ligates lysine onto the cytidine present at position 34 of the AUA codon-specific tRNA(Ile) that contains the anticodon CAU, in an ATP-dependent manner. Cytidine is converted to lysidine, thus changing the amino acid specificity of the tRNA from methionine to isoleucine. This chain is tRNA(Ile)-lysidine synthase, found in Serratia proteamaculans (strain 568).